The sequence spans 284 residues: Small ribosomal subunit protein uS2 (284 aa).

Residues 250 to 272 show a composition bias toward low complexity; it reads QELLAGATASPTAAGAAPGTPEA. Residues 250-284 form a disordered region; sequence QELLAGATASPTAAGAAPGTPEADIQTEPTAPQNP.

The protein belongs to the universal ribosomal protein uS2 family.

This Mycobacterium sp. (strain KMS) protein is Small ribosomal subunit protein uS2.